The primary structure comprises 165 residues: Selenoprotein F (165 aa).

A signal peptide spans 1–31 (MVAMAAGPSGCLVPAFGLRLLLATVLQAVSA). Position 96 (selenocysteine 96) is a non-standard amino acid, selenocysteine.

In terms of assembly, forms a tight complex with UGGT1/UGCGL1. Interacts with UGGT2/UGCGL2. Interacts with RDH11. Post-translationally, the N-terminus is blocked. Higher levels in prostate and thyroid gland.

It localises to the endoplasmic reticulum lumen. May be involved in redox reactions associated with the formation of disulfide bonds. May contribute to the quality control of protein folding in the endoplasmic reticulum. May regulate protein folding by enhancing the catalytic activity of UGGT1/UGCGL1 and UGGT2/UGCGL2. The chain is Selenoprotein F from Homo sapiens (Human).